The chain runs to 37 residues: M-oxotoxin-Ot2a (37 aa).

As to expression, expressed by the venom gland.

The protein resides in the secreted. Disrupts biological membranes, particularly those rich in phosphocholine. Has antimicrobial activity against Gram-negative bacterium E.coli, Gram-positive bacteria B.subtilis and S.aureus, and hemolytic activity against sheep, pig and guinea pig red blood cells. Has insecticidal activity against S.frugiperda ovarian cells by opening non-selective ion channels. Enhances the insecticidal activity of spider venom neurotoxic peptides. This is M-oxotoxin-Ot2a from Oxyopes takobius (Lynx spider).